The chain runs to 394 residues: NAD(P)H-quinone oxidoreductase subunit H (394 aa).

Belongs to the complex I 49 kDa subunit family. In terms of assembly, NDH-1 can be composed of about 15 different subunits; different subcomplexes with different compositions have been identified which probably have different functions.

The protein resides in the cellular thylakoid membrane. The enzyme catalyses a plastoquinone + NADH + (n+1) H(+)(in) = a plastoquinol + NAD(+) + n H(+)(out). The catalysed reaction is a plastoquinone + NADPH + (n+1) H(+)(in) = a plastoquinol + NADP(+) + n H(+)(out). Its function is as follows. NDH-1 shuttles electrons from an unknown electron donor, via FMN and iron-sulfur (Fe-S) centers, to quinones in the respiratory and/or the photosynthetic chain. The immediate electron acceptor for the enzyme in this species is believed to be plastoquinone. Couples the redox reaction to proton translocation, and thus conserves the redox energy in a proton gradient. Cyanobacterial NDH-1 also plays a role in inorganic carbon-concentration. In Nostoc punctiforme (strain ATCC 29133 / PCC 73102), this protein is NAD(P)H-quinone oxidoreductase subunit H.